Reading from the N-terminus, the 150-residue chain is Infection structure-specific protein 24 (150 aa).

Its function is as follows. Involved in the development of infection structures. The germ tube elongates across the leaf surface of the infected plant until it recognizes a stomate. Physical stimuli provided by the stomate induce differentiation of the germ tube to form a series of infection structures involved in host colonization. The protein is Infection structure-specific protein 24 (INF24) of Uromyces appendiculatus (Rust fungus).